The following is a 308-amino-acid chain: tRNA dimethylallyltransferase (308 aa).

8 to 15 contacts ATP; that stretch reads GPTGTGKS. 10-15 contacts substrate; the sequence is TGTGKS.

It belongs to the IPP transferase family. In terms of assembly, monomer. Mg(2+) serves as cofactor.

It carries out the reaction adenosine(37) in tRNA + dimethylallyl diphosphate = N(6)-dimethylallyladenosine(37) in tRNA + diphosphate. Its function is as follows. Catalyzes the transfer of a dimethylallyl group onto the adenine at position 37 in tRNAs that read codons beginning with uridine, leading to the formation of N6-(dimethylallyl)adenosine (i(6)A). The sequence is that of tRNA dimethylallyltransferase from Mycolicibacterium vanbaalenii (strain DSM 7251 / JCM 13017 / BCRC 16820 / KCTC 9966 / NRRL B-24157 / PYR-1) (Mycobacterium vanbaalenii).